The primary structure comprises 498 residues: ATP synthase subunit beta, chloroplastic (498 aa).

172 to 179 contacts ATP; it reads GGAGVGKT.

This sequence belongs to the ATPase alpha/beta chains family. As to quaternary structure, F-type ATPases have 2 components, CF(1) - the catalytic core - and CF(0) - the membrane proton channel. CF(1) has five subunits: alpha(3), beta(3), gamma(1), delta(1), epsilon(1). CF(0) has four main subunits: a(1), b(1), b'(1) and c(9-12).

The protein localises to the plastid. The protein resides in the chloroplast thylakoid membrane. It catalyses the reaction ATP + H2O + 4 H(+)(in) = ADP + phosphate + 5 H(+)(out). In terms of biological role, produces ATP from ADP in the presence of a proton gradient across the membrane. The catalytic sites are hosted primarily by the beta subunits. The polypeptide is ATP synthase subunit beta, chloroplastic (Nicotiana tomentosiformis (Tobacco)).